Consider the following 432-residue polypeptide: Enolase (432 aa).

Q167 lines the (2R)-2-phosphoglycerate pocket. E209 (proton donor) is an active-site residue. Mg(2+) is bound by residues D246, E290, and D317. Positions 342, 371, 372, and 393 each coordinate (2R)-2-phosphoglycerate. K342 serves as the catalytic Proton acceptor.

This sequence belongs to the enolase family. In terms of assembly, component of the RNA degradosome, a multiprotein complex involved in RNA processing and mRNA degradation. The cofactor is Mg(2+).

The protein localises to the cytoplasm. It localises to the secreted. The protein resides in the cell surface. The enzyme catalyses (2R)-2-phosphoglycerate = phosphoenolpyruvate + H2O. The protein operates within carbohydrate degradation; glycolysis; pyruvate from D-glyceraldehyde 3-phosphate: step 4/5. Functionally, catalyzes the reversible conversion of 2-phosphoglycerate (2-PG) into phosphoenolpyruvate (PEP). It is essential for the degradation of carbohydrates via glycolysis. The chain is Enolase from Escherichia coli O139:H28 (strain E24377A / ETEC).